A 429-amino-acid polypeptide reads, in one-letter code: Histidine--tRNA ligase (429 aa).

This sequence belongs to the class-II aminoacyl-tRNA synthetase family. As to quaternary structure, homodimer.

It localises to the cytoplasm. The catalysed reaction is tRNA(His) + L-histidine + ATP = L-histidyl-tRNA(His) + AMP + diphosphate + H(+). The sequence is that of Histidine--tRNA ligase from Corynebacterium efficiens (strain DSM 44549 / YS-314 / AJ 12310 / JCM 11189 / NBRC 100395).